Reading from the N-terminus, the 140-residue chain is Sex-regulated protein janus-B (140 aa).

R42 lines the substrate pocket. The active-site Proton acceptor is the H69. 110–112 (SRT) contacts substrate.

Belongs to the janus family.

Functionally, janA and janB regulate somatic sex differentiation. In Drosophila orena (Fruit fly), this protein is Sex-regulated protein janus-B (janB).